Here is a 311-residue protein sequence, read N- to C-terminus: D-alanine--D-alanine ligase (311 aa).

The 202-residue stretch at Lys105–Glu306 folds into the ATP-grasp domain. Ala133–Thr188 is an ATP binding site. 3 residues coordinate Mg(2+): Asp261, Glu273, and Asn275.

Belongs to the D-alanine--D-alanine ligase family. Mg(2+) serves as cofactor. Mn(2+) is required as a cofactor.

It is found in the cytoplasm. It carries out the reaction 2 D-alanine + ATP = D-alanyl-D-alanine + ADP + phosphate + H(+). Its pathway is cell wall biogenesis; peptidoglycan biosynthesis. Functionally, cell wall formation. This chain is D-alanine--D-alanine ligase, found in Syntrophobacter fumaroxidans (strain DSM 10017 / MPOB).